Consider the following 200-residue polypeptide: dTTP/UTP pyrophosphatase (200 aa).

The active-site Proton acceptor is D81.

It belongs to the Maf family. YhdE subfamily. Requires a divalent metal cation as cofactor.

Its subcellular location is the cytoplasm. The enzyme catalyses dTTP + H2O = dTMP + diphosphate + H(+). It catalyses the reaction UTP + H2O = UMP + diphosphate + H(+). Functionally, nucleoside triphosphate pyrophosphatase that hydrolyzes dTTP and UTP. May have a dual role in cell division arrest and in preventing the incorporation of modified nucleotides into cellular nucleic acids. This Albidiferax ferrireducens (strain ATCC BAA-621 / DSM 15236 / T118) (Rhodoferax ferrireducens) protein is dTTP/UTP pyrophosphatase.